The primary structure comprises 302 residues: MSTATISPSQIGRGARPDGEGSVQVQMETGAKIGNAKVFAIYGKGGIGKSTTSSNLSVAFSKLGKRVLQIGCDPKHDSTFTLTKRMVPTVIDVLETVNFHPEELRVEDFVFEGTNGVMCVEAGGPPAGTGCGGYVVGQTVKLLKEHHLLEETDVVVFDVLGDVVCGGFAAPLQHADRALIVTANDFDSIFAANRIVQAIGAKAKNYNVRLGGIIANRSDATDQIDKFNERIGMRSLARIPALDVIRKSRLKKATLFEMEESPEVLAVQAEYLQLAQRLWDGVDPLYCEPLKDRDIFDLLGYD.

A compositionally biased stretch (polar residues) spans 1–10 (MSTATISPSQ). Residues 1–21 (MSTATISPSQIGRGARPDGEG) form a disordered region. Residues 46–51 (GIGKST) and Lys75 each bind ATP. Position 50 (Ser50) interacts with Mg(2+). 2 residues coordinate [4Fe-4S] cluster: Cys131 and Cys165. Residues 216-217 (NR) and 240-242 (PAL) contribute to the ATP site.

Belongs to the NifH/BchL/ChlL family. Homodimer. Protochlorophyllide reductase is composed of three subunits; BchL, BchN and BchB. [4Fe-4S] cluster serves as cofactor.

The catalysed reaction is chlorophyllide a + oxidized 2[4Fe-4S]-[ferredoxin] + 2 ADP + 2 phosphate = protochlorophyllide a + reduced 2[4Fe-4S]-[ferredoxin] + 2 ATP + 2 H2O. The protein operates within porphyrin-containing compound metabolism; bacteriochlorophyll biosynthesis (light-independent). Functionally, component of the dark-operative protochlorophyllide reductase (DPOR) that uses Mg-ATP and reduced ferredoxin to reduce ring D of protochlorophyllide (Pchlide) to form chlorophyllide a (Chlide). This reaction is light-independent. The L component serves as a unique electron donor to the NB-component of the complex, and binds Mg-ATP. The polypeptide is Light-independent protochlorophyllide reductase iron-sulfur ATP-binding protein (Rubrivivax gelatinosus (strain NBRC 100245 / IL144)).